The following is an 80-amino-acid chain: Cytochrome c oxidase subunit 7A1, mitochondrial (80 aa).

Residues 1–21 (MLAPRVSQALIRSFSSTARNR) constitute a mitochondrion transit peptide. Residues 22–46 (LKNRVPEKQKLFQEDNGIPVYLKGG) lie on the Mitochondrial matrix side of the membrane. The chain crosses the membrane as a helical span at residues 47–75 (VVDHILYRVTMGLCLGGTAYGVYCLAWAS). At 76 to 80 (FPRNK) the chain is on the mitochondrial intermembrane side.

The protein belongs to the cytochrome c oxidase VIIa family. As to quaternary structure, component of the complex IV (CIV, cytochrome c oxidase), a multisubunit enzyme composed of 14 subunits. The complex is composed of a catalytic core of 3 subunits MT-CO1, MT-CO2 and MT-CO3, encoded in the mitochondrial DNA, and 11 supernumerary subunits COX4I1 (or COX4I2), COX5A, COX5B, COX6A2 (or COX6A1), COX6B1 (or COX6B2), COX6C, COX7A1 (or COX7A2), COX7B, COX7C, COX8B and NDUFA4, which are encoded in the nuclear genome. The complex exists as a monomer or a dimer and forms supercomplexes (SCs) in the inner mitochondrial membrane with NADH-ubiquinone oxidoreductase (complex I, CI) and ubiquinol-cytochrome c oxidoreductase (cytochrome b-c1 complex, complex III, CIII), resulting in different assemblies (supercomplex SCI(1)III(2)IV(1) and megacomplex MCI(2)III(2)IV(2)).

It is found in the mitochondrion inner membrane. It participates in energy metabolism; oxidative phosphorylation. In terms of biological role, component of the mitochondrial respiratory complex IV (CIV, also named cytochrome c oxidase complex), the last enzyme in the mitochondrial electron transport chain which drives oxidative phosphorylation. The CIV complex is the component of the respiratory chain that catalyzes the reduction of oxygen to water. Acts as an assembly factor that specifically drives the homodimerization of CIV complexes, mediating the formation of mitochondrial respiratory supercomplexes (respirasomes) containing two CIV: supercomplxes with two molecules of CIV show improved activity. Despite being highly expressed in brown adipose tissue, not required for thermogenesis. This chain is Cytochrome c oxidase subunit 7A1, mitochondrial (COX7A1), found in Saimiri sciureus (Common squirrel monkey).